Consider the following 110-residue polypeptide: Glutaredoxin-2 (110 aa).

Positions 6–106 (KAFVEKAISN…KMIAELKENK (101 aa)) constitute a Glutaredoxin domain. Cysteine 26 and cysteine 29 are joined by a disulfide.

This sequence belongs to the glutaredoxin family.

The disulfide bond functions as an electron carrier in the glutathione-dependent synthesis of deoxyribonucleotides by the enzyme ribonucleotide reductase. In addition, it is also involved in reducing some disulfides in a coupled system with glutathione reductase. Thioltransferase catalyzes cellular thiol-disulfide transhydrogenation reactions. It transfers reducing equivalents to cytosolic protein and nonprotein disulfides. The sequence is that of Glutaredoxin-2 (grx2) from Schizosaccharomyces pombe (strain 972 / ATCC 24843) (Fission yeast).